An 87-amino-acid chain; its full sequence is Glutaredoxin (87 aa).

Residues 1–87 (MFVVIFGRPG…YAKENLGLFD (87 aa)) form the Glutaredoxin domain. A disulfide bond links cysteine 11 and cysteine 14.

The protein belongs to the glutaredoxin family. In terms of assembly, monomer.

The protein localises to the cytoplasm. In terms of biological role, has a glutathione-disulfide oxidoreductase activity in the presence of NADPH and glutathione reductase. Reduces low molecular weight disulfides and proteins. The protein is Glutaredoxin (grx) of Vibrio cholerae serotype O1 (strain ATCC 39315 / El Tor Inaba N16961).